The primary structure comprises 462 residues: UDP-N-acetylmuramoylalanine--D-glutamate ligase (462 aa).

Residue 118–124 coordinates ATP; sequence GTNGKST.

Belongs to the MurCDEF family.

The protein localises to the cytoplasm. It carries out the reaction UDP-N-acetyl-alpha-D-muramoyl-L-alanine + D-glutamate + ATP = UDP-N-acetyl-alpha-D-muramoyl-L-alanyl-D-glutamate + ADP + phosphate + H(+). The protein operates within cell wall biogenesis; peptidoglycan biosynthesis. In terms of biological role, cell wall formation. Catalyzes the addition of glutamate to the nucleotide precursor UDP-N-acetylmuramoyl-L-alanine (UMA). This is UDP-N-acetylmuramoylalanine--D-glutamate ligase from Anaeromyxobacter dehalogenans (strain 2CP-C).